Here is a 196-residue protein sequence, read N- to C-terminus: Golgi to ER traffic protein 1 (196 aa).

Residues Met-1–Ile-10 lie on the Lumenal side of the membrane. Residues Leu-11–Ser-30 traverse the membrane as a helical segment. At Thr-31–Leu-114 the chain is on the cytoplasmic side. Positions Ala-76–Leu-114 form a coiled coil. Residues Met-115 to Phe-135 traverse the membrane as a helical segment. Over Tyr-136 to Ala-159 the chain is Lumenal. The helical transmembrane segment at Val-160–Val-176 threads the bilayer. Residues Ile-177 to Lys-196 are Cytoplasmic-facing.

The protein belongs to the WRB/GET1 family. As to quaternary structure, component of the Golgi to ER traffic (GET) complex, which is composed of GET1, GET2 and GET3. Within the complex, GET1 and GET2 form a heterotetramer which is stabilized by phosphatidylinositol binding and which binds to the GET3 homodimer.

Its subcellular location is the endoplasmic reticulum membrane. The protein resides in the golgi apparatus membrane. Its function is as follows. Required for the post-translational delivery of tail-anchored (TA) proteins to the endoplasmic reticulum. Together with GET2, acts as a membrane receptor for soluble GET3, which recognizes and selectively binds the transmembrane domain of TA proteins in the cytosol. The GET complex cooperates with the HDEL receptor ERD2 to mediate the ATP-dependent retrieval of resident ER proteins that contain a C-terminal H-D-E-L retention signal from the Golgi to the ER. This is Golgi to ER traffic protein 1 from Candida tropicalis (strain ATCC MYA-3404 / T1) (Yeast).